Consider the following 262-residue polypeptide: Thiazole synthase (262 aa).

The active-site Schiff-base intermediate with DXP is the lysine 97. Residues glycine 158, 185–186, and 207–208 each bind 1-deoxy-D-xylulose 5-phosphate; these read AG and NT. Residues 243 to 262 are disordered; that stretch reads DKAQASTPTVGQPFWHSAEY.

Belongs to the ThiG family. Homotetramer. Forms heterodimers with either ThiH or ThiS.

It is found in the cytoplasm. It catalyses the reaction [ThiS sulfur-carrier protein]-C-terminal-Gly-aminoethanethioate + 2-iminoacetate + 1-deoxy-D-xylulose 5-phosphate = [ThiS sulfur-carrier protein]-C-terminal Gly-Gly + 2-[(2R,5Z)-2-carboxy-4-methylthiazol-5(2H)-ylidene]ethyl phosphate + 2 H2O + H(+). Its pathway is cofactor biosynthesis; thiamine diphosphate biosynthesis. Catalyzes the rearrangement of 1-deoxy-D-xylulose 5-phosphate (DXP) to produce the thiazole phosphate moiety of thiamine. Sulfur is provided by the thiocarboxylate moiety of the carrier protein ThiS. In vitro, sulfur can be provided by H(2)S. This chain is Thiazole synthase, found in Neisseria meningitidis serogroup A / serotype 4A (strain DSM 15465 / Z2491).